The chain runs to 1134 residues: Vinculin (1134 aa).

Positions 1–835 are N-terminal globular head; sequence MPVFHTRTIE…GAVAKVREAF (835 aa). Phosphoserine is present on serine 97. Positions 168–208 are talin-interaction; sequence MTKMAKMIDERQQELTHQEHRVMLVNSMNTVKELLPVLISA. Lysine 173 is subject to N6-acetyllysine. 3 repeat units span residues 259–369, 370–479, and 480–589. Residues 259–589 are 3 X 112 AA tandem repeats; it reads ASKDTEAMKR…LKDLKARMQE (331 aa). Phosphoserine occurs at positions 260, 272, 275, 288, 290, 346, and 434. Residue lysine 496 is modified to N6-acetyllysine. Residue tyrosine 537 is modified to Phosphotyrosine. 3 positions are modified to phosphoserine: serine 574, serine 579, and serine 600. Residues threonine 604 and threonine 672 each carry the phosphothreonine modification. Serine 721 bears the Phosphoserine mark. An interaction with ACTN4 region spans residues 741–764; that stretch reads MANIQPQMLVAGATSIARRANRIL. Serine 795 and serine 809 each carry phosphoserine. Tyrosine 822 carries the post-translational modification Phosphotyrosine. The segment at 836-878 is linker (Pro-rich); sequence QPQEPDFPPPPPDLEQLRLTDELAPPKPPLPEGEVPPPRPPPP. The interval 857–887 is disordered; it reads ELAPPKPPLPEGEVPPPRPPPPEEKDEEFPE. A compositionally biased stretch (pro residues) spans 860–876; the sequence is PPKPPLPEGEVPPPRPP. A C-terminal tail region spans residues 879–1134; that stretch reads EEKDEEFPEQ…RWVRKTPWYQ (256 aa). Facilitates phospholipid membrane insertion stretches follow at residues 1003–1046 and 1120–1134; these read RLVR…KRIR and AGFT…PWYQ. Tyrosine 1133 is modified (phosphotyrosine; by SRC-type Tyr-kinases).

It belongs to the vinculin/alpha-catenin family. As to quaternary structure, exhibits self-association properties. Part of a complex composed of THSD1, PTK2/FAK1, TLN1 and VCL. Interacts with APBB1IP and NRAP. Interacts with TLN1. Interacts with CTNNB1 and this interaction is necessary for its localization to the cell-cell junctions and for its function in regulating cell surface expression of E-cadherin. Interacts with SYNM. Interacts with SORBS1. Interacts with CTNNA1. Binds to ACTN4; this interaction triggers conformational changes. Interacts with FLII. (Microbial infection) Interacts via its globular head domain with the central portion of S.flexneri IcsA (also called VirG). Phosphorylated; on serines, threonines and tyrosines. Phosphorylation on Tyr-1133 in activated platelets affects head-tail interactions and cell spreading but has no effect on actin binding nor on localization to focal adhesion plaques. Post-translationally, acetylated; mainly by myristic acid but also by a small amount of palmitic acid. As to expression, metavinculin is muscle-specific.

Its subcellular location is the cell membrane. It is found in the cell junction. It localises to the adherens junction. The protein localises to the focal adhesion. The protein resides in the cytoplasm. Its subcellular location is the cytoskeleton. It is found in the sarcolemma. It localises to the cell projection. The protein localises to the podosome. Actin filament (F-actin)-binding protein involved in cell-matrix adhesion and cell-cell adhesion. Regulates cell-surface E-cadherin expression and potentiates mechanosensing by the E-cadherin complex. May also play important roles in cell morphology and locomotion. The sequence is that of Vinculin (VCL) from Homo sapiens (Human).